Here is a 228-residue protein sequence, read N- to C-terminus: Glycerol-3-phosphate acyltransferase (228 aa).

6 helical membrane passes run 1–21 (MINWLVLNAVILIVAYLLGAT), 56–76 (VPALVVLVIDIFKGALAIALV), 104–124 (MVIIAGLIAIVGHTKSIWIGF), 136–156 (ILLAISWVVGLGTLSVFIVVL), 161–181 (IVSLSSIIAAISVSGLMFFTG), and 183–203 (PLPYQIFAITGGIYVIWRHIS).

This sequence belongs to the PlsY family. As to quaternary structure, probably interacts with PlsX.

The protein resides in the cell inner membrane. The catalysed reaction is an acyl phosphate + sn-glycerol 3-phosphate = a 1-acyl-sn-glycero-3-phosphate + phosphate. Its pathway is lipid metabolism; phospholipid metabolism. In terms of biological role, catalyzes the transfer of an acyl group from acyl-phosphate (acyl-PO(4)) to glycerol-3-phosphate (G3P) to form lysophosphatidic acid (LPA). This enzyme utilizes acyl-phosphate as fatty acyl donor, but not acyl-CoA or acyl-ACP. This chain is Glycerol-3-phosphate acyltransferase, found in Trichodesmium erythraeum (strain IMS101).